A 249-amino-acid chain; its full sequence is 5'-nucleotidase SurE (249 aa).

Residues aspartate 9, aspartate 10, serine 40, and asparagine 92 each coordinate a divalent metal cation.

The protein belongs to the SurE nucleotidase family. A divalent metal cation serves as cofactor.

The protein localises to the cytoplasm. It carries out the reaction a ribonucleoside 5'-phosphate + H2O = a ribonucleoside + phosphate. In terms of biological role, nucleotidase that shows phosphatase activity on nucleoside 5'-monophosphates. The sequence is that of 5'-nucleotidase SurE from Shewanella sp. (strain ANA-3).